The following is a 267-amino-acid chain: Acyl-[acyl-carrier-protein]--UDP-N-acetylglucosamine O-acyltransferase (267 aa).

It belongs to the transferase hexapeptide repeat family. LpxA subfamily. In terms of assembly, homotrimer.

It is found in the cytoplasm. The enzyme catalyses a (3R)-hydroxyacyl-[ACP] + UDP-N-acetyl-alpha-D-glucosamine = a UDP-3-O-[(3R)-3-hydroxyacyl]-N-acetyl-alpha-D-glucosamine + holo-[ACP]. It functions in the pathway glycolipid biosynthesis; lipid IV(A) biosynthesis; lipid IV(A) from (3R)-3-hydroxytetradecanoyl-[acyl-carrier-protein] and UDP-N-acetyl-alpha-D-glucosamine: step 1/6. Functionally, involved in the biosynthesis of lipid A, a phosphorylated glycolipid that anchors the lipopolysaccharide to the outer membrane of the cell. The sequence is that of Acyl-[acyl-carrier-protein]--UDP-N-acetylglucosamine O-acyltransferase from Hamiltonella defensa subsp. Acyrthosiphon pisum (strain 5AT).